The chain runs to 363 residues: Putative serine/threonine-protein kinase gskl-1 (363 aa).

Residues 20 to 304 form the Protein kinase domain; the sequence is FGAHKLCGSG…AIDVLKMPLF (285 aa). Residues 26–34 and K50 contribute to the ATP site; that span reads CGSGRFSNV. The active-site Proton acceptor is D146. A disordered region spans residues 311-363; the sequence is PPKKRSNGVEMPNLASYTEMHHKREPETEVVADIQTTEKAEKESDSTNEELED. The span at 346–355 shows a compositional bias: basic and acidic residues; it reads TTEKAEKESD.

Belongs to the protein kinase superfamily. Ser/Thr protein kinase family. Expressed during multiple stages of spermatogenesis, in males and hermaphrodites (at protein level).

It localises to the cytoplasm. The protein resides in the cell projection. It is found in the pseudopodium. The catalysed reaction is L-seryl-[protein] + ATP = O-phospho-L-seryl-[protein] + ADP + H(+). It carries out the reaction L-threonyl-[protein] + ATP = O-phospho-L-threonyl-[protein] + ADP + H(+). Functionally, may be an autophosphorylating tyrosine kinase, a bifunctional (serine/tyrosine-specific) protein kinase, or a serine kinase that is a substrate for an associated tyrosine kinase. Acting in concert with putative serine/threonine-protein kinase gskl-2, required for sister chromatid segregation and spermatid budding during male meiosis. Plays a role in regulating female meiosis II, together with gskl-2. Involved in sperm pseudopod formation and function, together with gskl-2. This is Putative serine/threonine-protein kinase gskl-1 from Caenorhabditis elegans.